Reading from the N-terminus, the 367-residue chain is Phosphoribosylaminoimidazole-succinocarboxamide synthase (367 aa).

The protein belongs to the SAICAR synthetase family.

The catalysed reaction is 5-amino-1-(5-phospho-D-ribosyl)imidazole-4-carboxylate + L-aspartate + ATP = (2S)-2-[5-amino-1-(5-phospho-beta-D-ribosyl)imidazole-4-carboxamido]succinate + ADP + phosphate + 2 H(+). Its pathway is purine metabolism; IMP biosynthesis via de novo pathway; 5-amino-1-(5-phospho-D-ribosyl)imidazole-4-carboxamide from 5-amino-1-(5-phospho-D-ribosyl)imidazole-4-carboxylate: step 1/2. This chain is Phosphoribosylaminoimidazole-succinocarboxamide synthase, found in Shewanella amazonensis (strain ATCC BAA-1098 / SB2B).